The primary structure comprises 721 residues: Glycine--tRNA ligase beta subunit (721 aa).

This sequence belongs to the class-II aminoacyl-tRNA synthetase family. Tetramer of two alpha and two beta subunits.

It is found in the cytoplasm. It carries out the reaction tRNA(Gly) + glycine + ATP = glycyl-tRNA(Gly) + AMP + diphosphate. This is Glycine--tRNA ligase beta subunit from Sinorhizobium medicae (strain WSM419) (Ensifer medicae).